We begin with the raw amino-acid sequence, 246 residues long: Pyruvate formate-lyase 1-activating enzyme (246 aa).

The Radical SAM core domain occupies 16–239; it reads VDGPGIRFIT…MERVKGILEQ (224 aa). Cys-30, Cys-34, and Cys-37 together coordinate [4Fe-4S] cluster. Residues 36–38, Gly-79, 130–132, and His-203 each bind S-adenosyl-L-methionine; these read YCH and DLK.

Belongs to the organic radical-activating enzymes family. [4Fe-4S] cluster is required as a cofactor.

It is found in the cytoplasm. The enzyme catalyses glycyl-[formate C-acetyltransferase] + reduced [flavodoxin] + S-adenosyl-L-methionine = glycin-2-yl radical-[formate C-acetyltransferase] + semiquinone [flavodoxin] + 5'-deoxyadenosine + L-methionine + H(+). Functionally, activation of pyruvate formate-lyase 1 under anaerobic conditions by generation of an organic free radical, using S-adenosylmethionine and reduced flavodoxin as cosubstrates to produce 5'-deoxy-adenosine. The polypeptide is Pyruvate formate-lyase 1-activating enzyme (pflA) (Escherichia coli O157:H7).